The following is a 79-amino-acid chain: Small ribosomal subunit protein bS18 (79 aa).

Belongs to the bacterial ribosomal protein bS18 family. Part of the 30S ribosomal subunit. Forms a tight heterodimer with protein bS6.

Functionally, binds as a heterodimer with protein bS6 to the central domain of the 16S rRNA, where it helps stabilize the platform of the 30S subunit. The polypeptide is Small ribosomal subunit protein bS18 (Streptococcus thermophilus (strain CNRZ 1066)).